A 127-amino-acid polypeptide reads, in one-letter code: Unclassified hydrophobin 5 (127 aa).

A signal peptide spans 1–24 (MFNKQTNAIVLLFTFALFATLAVA). Disulfide bonds link Cys-39/Cys-107, Cys-46/Cys-101, Cys-47/Cys-92, and Cys-108/Cys-121.

It belongs to the fungal hydrophobin family. Self-assembles to form functional amyloid fibrils called rodlets. Self-assembly into fibrillar rodlets occurs spontaneously at hydrophobic:hydrophilic interfaces and the rodlets further associate laterally to form amphipathic monolayers.

It is found in the secreted. The protein resides in the cell wall. Aerial growth, conidiation, and dispersal of filamentous fungi in the environment rely upon a capability of their secreting small amphipathic proteins called hydrophobins (HPBs) with low sequence identity. Class I can self-assemble into an outermost layer of rodlet bundles on aerial cell surfaces, conferring cellular hydrophobicity that supports fungal growth, development and dispersal; whereas Class II form highly ordered films at water-air interfaces through intermolecular interactions but contribute nothing to the rodlet structure. The polypeptide is Unclassified hydrophobin 5 (Pleurotus ostreatus (strain PC15) (Oyster mushroom)).